Reading from the N-terminus, the 199-residue chain is Large ribosomal subunit protein bL25 (199 aa).

The protein belongs to the bacterial ribosomal protein bL25 family. CTC subfamily. Part of the 50S ribosomal subunit; part of the 5S rRNA/L5/L18/L25 subcomplex. Contacts the 5S rRNA. Binds to the 5S rRNA independently of L5 and L18.

This is one of the proteins that binds to the 5S RNA in the ribosome where it forms part of the central protuberance. The chain is Large ribosomal subunit protein bL25 from Caulobacter sp. (strain K31).